Here is a 156-residue protein sequence, read N- to C-terminus: MARRRRPERREILPDPRFGDVVLSKFMNSVMLDGKKSVAESIVYGALEAVEARAKKEPLGVFHEALANIRPNIEVRSRRVGGATYQVPVEVRPDRAQALAIRWLITAARNRSETTMAARLSGELLDASNNRGNAVKKREDTHRMAEANRAFSHYRW.

This sequence belongs to the universal ribosomal protein uS7 family. As to quaternary structure, part of the 30S ribosomal subunit. Contacts proteins S9 and S11.

Its function is as follows. One of the primary rRNA binding proteins, it binds directly to 16S rRNA where it nucleates assembly of the head domain of the 30S subunit. Is located at the subunit interface close to the decoding center, probably blocks exit of the E-site tRNA. This is Small ribosomal subunit protein uS7 from Sphingopyxis alaskensis (strain DSM 13593 / LMG 18877 / RB2256) (Sphingomonas alaskensis).